Here is a 170-residue protein sequence, read N- to C-terminus: Thialysine N-epsilon-acetyltransferase (170 aa).

In terms of domain architecture, N-acetyltransferase spans Val-4–Glu-166. Residue Tyr-27–Glu-28 coordinates substrate. Lys-29 is subject to N6-acetyllysine. Position 92 (Glu-92) interacts with substrate. Acetyl-CoA contacts are provided by residues Ile-94–Val-96, Gly-102–Ser-107, Asn-133–Lys-135, and Tyr-140. Residue Tyr-140 is the Proton donor of the active site. Position 152 (Glu-152) interacts with substrate.

Belongs to the acetyltransferase family. Homodimer.

The protein localises to the cytoplasm. The catalysed reaction is S-(2-aminoethyl)-L-cysteine + acetyl-CoA = S-(2-acetamidoethyl)-L-cysteine + CoA + H(+). It carries out the reaction an alkane-alpha,omega-diamine + acetyl-CoA = an N-acetylalkane-alpha,omega-diamine + CoA + H(+). In terms of biological role, catalyzes the N-acetylation of the amino acid thialysine (S-(2-aminoethyl)-L-cysteine), a L-lysine analog with the 4-methylene group substituted with a sulfur. May also catalyze acetylation of polyamines, such as norspermidine, spermidine or spermine. However, ability to acetylate polyamines is weak, suggesting that it does not act as a diamine acetyltransferase in vivo. The chain is Thialysine N-epsilon-acetyltransferase from Sus scrofa (Pig).